The sequence spans 136 residues: Protein NrdI (136 aa).

The protein belongs to the NrdI family.

In terms of biological role, probably involved in ribonucleotide reductase function. This chain is Protein NrdI, found in Escherichia coli (strain 55989 / EAEC).